The following is a 188-amino-acid chain: Type II secretion system protein H (188 aa).

Residues M1–G10 constitute a propeptide, leader sequence. F11 is modified (N-methylphenylalanine). The chain crosses the membrane as a helical span at residues L13 to P35.

The protein belongs to the GSP H family. In terms of assembly, type II secretion is composed of four main components: the outer membrane complex, the inner membrane complex, the cytoplasmic secretion ATPase and the periplasm-spanning pseudopilus. Interacts with core component OutG. Cleaved by prepilin peptidase. In terms of processing, methylated by prepilin peptidase at the amino group of the N-terminal phenylalanine once the leader sequence is cleaved by prepilin peptidase.

The protein resides in the cell inner membrane. In terms of biological role, component of the type II secretion system required for the energy-dependent secretion of extracellular factors such as proteases and toxins from the periplasm. Part of the pseudopilus tip complex that is critical for the recognition and binding of secretion substrates. The protein is Type II secretion system protein H (outH) of Pectobacterium carotovorum subsp. carotovorum (Erwinia carotovora subsp. carotovora).